Reading from the N-terminus, the 282-residue chain is NADPH-dependent 7-cyano-7-deazaguanine reductase (282 aa).

88 to 90 lines the substrate pocket; the sequence is IES. 90-91 serves as a coordination point for NADPH; sequence SK. Residue cysteine 190 is the Thioimide intermediate of the active site. Aspartate 197 serves as the catalytic Proton donor. 229-230 contributes to the substrate binding site; it reads HE. Residue 258–259 coordinates NADPH; sequence RG.

Belongs to the GTP cyclohydrolase I family. QueF type 2 subfamily. In terms of assembly, homodimer.

It localises to the cytoplasm. It catalyses the reaction 7-aminomethyl-7-carbaguanine + 2 NADP(+) = 7-cyano-7-deazaguanine + 2 NADPH + 3 H(+). Its pathway is tRNA modification; tRNA-queuosine biosynthesis. Catalyzes the NADPH-dependent reduction of 7-cyano-7-deazaguanine (preQ0) to 7-aminomethyl-7-deazaguanine (preQ1). This chain is NADPH-dependent 7-cyano-7-deazaguanine reductase, found in Salmonella heidelberg (strain SL476).